The following is a 408-amino-acid chain: Peptidase T (408 aa).

Positions 1–28 (MKNQLIDRLTRYTTIDTQSDPKSTTTPS) are disordered. Residues 11-28 (RYTTIDTQSDPKSTTTPS) are compositionally biased toward polar residues. A Zn(2+)-binding site is contributed by histidine 78. The active site involves aspartate 80. Residue aspartate 140 participates in Zn(2+) binding. Residue glutamate 174 is the Proton acceptor of the active site. Zn(2+) contacts are provided by glutamate 175, aspartate 197, and histidine 379.

The protein belongs to the peptidase M20B family. Zn(2+) is required as a cofactor.

The protein resides in the cytoplasm. The enzyme catalyses Release of the N-terminal residue from a tripeptide.. Functionally, cleaves the N-terminal amino acid of tripeptides. This Staphylococcus aureus (strain USA300 / TCH1516) protein is Peptidase T.